The chain runs to 121 residues: Large ribosomal subunit protein uL14 (121 aa).

Belongs to the universal ribosomal protein uL14 family. As to quaternary structure, part of the 50S ribosomal subunit. Forms a cluster with proteins L3 and L19. In the 70S ribosome, L14 and L19 interact and together make contacts with the 16S rRNA in bridges B5 and B8.

In terms of biological role, binds to 23S rRNA. Forms part of two intersubunit bridges in the 70S ribosome. The chain is Large ribosomal subunit protein uL14 from Pseudoalteromonas atlantica (strain T6c / ATCC BAA-1087).